The following is a 393-amino-acid chain: Chalcone synthase 2 (393 aa).

The active site involves cysteine 166.

It belongs to the thiolase-like superfamily. Chalcone/stilbene synthases family.

It catalyses the reaction (E)-4-coumaroyl-CoA + 3 malonyl-CoA + 3 H(+) = 2',4,4',6'-tetrahydroxychalcone + 3 CO2 + 4 CoA. It functions in the pathway secondary metabolite biosynthesis; flavonoid biosynthesis. In terms of biological role, the primary product of this enzyme is 4,2',4',6'-tetrahydroxychalcone (also termed naringenin-chalcone or chalcone) which can under specific conditions spontaneously isomerize into naringenin. The sequence is that of Chalcone synthase 2 (CHS2) from Ruta graveolens (Common rue).